The following is a 384-amino-acid chain: Glycerol 3-phosphate oxidase (384 aa).

A signal peptide spans 1-17 (MQTIDVLIVGGGVIGTS). Position 14 (Ile14) interacts with FAD. Cys18 carries N-palmitoyl cysteine lipidation. Cys18 carries S-diacylglycerol cysteine lipidation. Residues Glu33, 42–43 (TS), and 47–49 (SGV) contribute to the FAD site. 2 residues coordinate sn-glycerol 3-phosphate: Ser47 and His51. Catalysis depends on His51, which acts as the Proton acceptor. Residue Val177 coordinates FAD. Residues Lys258 and Arg320 each coordinate sn-glycerol 3-phosphate. 346–347 (MK) is a binding site for FAD. Residue Ser348 participates in sn-glycerol 3-phosphate binding. An FAD-binding site is contributed by Thr352.

Monomer. The cofactor is FAD.

Its subcellular location is the cytoplasm. It localises to the cell membrane. The catalysed reaction is sn-glycerol 3-phosphate + O2 = dihydroxyacetone phosphate + H2O2. Its pathway is polyol metabolism; glycerol degradation via glycerol kinase pathway; glycerone phosphate from sn-glycerol 3-phosphate (aerobic route): step 1/1. In terms of biological role, catalyzes the oxidation of glycerol 3-phosphate to dihydroxyacetone phosphate (DHAP), with a reduction of O2 to H2O2. The formation of hydrogen peroxide by this enzyme is crucial for cytotoxic effects on host cells. Does not show any dehydrogenase activity with NAD(+). The protein is Glycerol 3-phosphate oxidase of Mycoplasma genitalium (strain ATCC 33530 / DSM 19775 / NCTC 10195 / G37) (Mycoplasmoides genitalium).